The sequence spans 370 residues: MTVRNIASICNMGTNASALEKDIGPEQFPINEHYFGLVNFGNTCYCNSVLQALYFCRPFRENVLAYKVQQKKKENLLTCLADLFHSIATQKKKVGVIPPKKFISRLRKENDLFDNYMQQDAHEFLNYLLNTVADILQEERKQEKQNGRLKNNGTAIATDTEPEQNKIDPTWVHEIFQGTLTNETRCLNCETVSSKDEDFLDLSVDVEQNTSITHCLRDFSNTETLCSEYKYYCEMCCSKQEAQKRMRVKKLPMILALHLKRFKYMEQLHRYTKLSYRVVFPLELRLFNTSGDAVNLDRMYDLVAVVVHCGSGPNRGHYITIVKSHGFWLLFDDDIVEKIDAQAIEEFYGLTSDISKNSESGYILFYQSRE.

The USP domain maps to 35–369 (FGLVNFGNTC…SGYILFYQSR (335 aa)). Catalysis depends on C44, which acts as the Nucleophile. Zn(2+) contacts are provided by C186, C189, C233, and C236. The active-site Proton acceptor is the H317.

The protein belongs to the peptidase C19 family. USP12/USP46 subfamily. As to quaternary structure, interacts with WDR48.

It carries out the reaction Thiol-dependent hydrolysis of ester, thioester, amide, peptide and isopeptide bonds formed by the C-terminal Gly of ubiquitin (a 76-residue protein attached to proteins as an intracellular targeting signal).. Deubiquitinating enzyme that plays a role in behavior, possibly by regulating GABA action. Has almost no deubiquitinating activity by itself and requires the interaction with wdr48 to have a high activity. This chain is Ubiquitin carboxyl-terminal hydrolase 46 (usp46), found in Danio rerio (Zebrafish).